A 511-amino-acid chain; its full sequence is 2-isopropylmalate synthase (511 aa).

A Pyruvate carboxyltransferase domain is found at 4 to 266 (IRIFDTTLRD…ETGIDLSQLY (263 aa)). The Mn(2+) site is built by D13, H201, H203, and N237. Positions 391–511 (VLEKIRVVSG…IAANARAQKN (121 aa)) are regulatory domain.

The protein belongs to the alpha-IPM synthase/homocitrate synthase family. LeuA type 1 subfamily. Homodimer. Mn(2+) is required as a cofactor.

It localises to the cytoplasm. It carries out the reaction 3-methyl-2-oxobutanoate + acetyl-CoA + H2O = (2S)-2-isopropylmalate + CoA + H(+). It participates in amino-acid biosynthesis; L-leucine biosynthesis; L-leucine from 3-methyl-2-oxobutanoate: step 1/4. In terms of biological role, catalyzes the condensation of the acetyl group of acetyl-CoA with 3-methyl-2-oxobutanoate (2-ketoisovalerate) to form 3-carboxy-3-hydroxy-4-methylpentanoate (2-isopropylmalate). This chain is 2-isopropylmalate synthase, found in Acetivibrio thermocellus (strain ATCC 27405 / DSM 1237 / JCM 9322 / NBRC 103400 / NCIMB 10682 / NRRL B-4536 / VPI 7372) (Clostridium thermocellum).